The sequence spans 68 residues: Acylphosphatase (68 aa).

Positions 3 to 68 (RIACTVHGRV…RCTAGLPSAP (66 aa)) constitute an Acylphosphatase-like domain. Catalysis depends on residues Arg18 and Asn36.

This sequence belongs to the acylphosphatase family.

The enzyme catalyses an acyl phosphate + H2O = a carboxylate + phosphate + H(+). This Oleidesulfovibrio alaskensis (strain ATCC BAA-1058 / DSM 17464 / G20) (Desulfovibrio alaskensis) protein is Acylphosphatase (acyP).